The primary structure comprises 249 residues: Diaminopimelate epimerase (249 aa).

Residues Asn-11 and Asn-60 each contribute to the substrate site. The active-site Proton donor is Cys-69. Substrate-binding positions include 70-71 (GN), Asn-164, and 182-183 (ER). Catalysis depends on Cys-192, which acts as the Proton acceptor. Residue 193–194 (GT) participates in substrate binding.

It belongs to the diaminopimelate epimerase family. In terms of assembly, homodimer.

It localises to the cytoplasm. It catalyses the reaction (2S,6S)-2,6-diaminopimelate = meso-2,6-diaminopimelate. Its pathway is amino-acid biosynthesis; L-lysine biosynthesis via DAP pathway; DL-2,6-diaminopimelate from LL-2,6-diaminopimelate: step 1/1. In terms of biological role, catalyzes the stereoinversion of LL-2,6-diaminopimelate (L,L-DAP) to meso-diaminopimelate (meso-DAP), a precursor of L-lysine and an essential component of the bacterial peptidoglycan. In Campylobacter jejuni (strain RM1221), this protein is Diaminopimelate epimerase.